Consider the following 297-residue polypeptide: HTH-type transcriptional regulator ArgP (297 aa).

Positions 4-60 (PDYRTLQALDAVIRERGFERAAQKLCITQSAVSQRIKQLENLFGQPLLVRTVPPRPT) constitute an HTH lysR-type domain. The H-T-H motif DNA-binding region spans 21–40 (FERAAQKLCITQSAVSQRIK).

It belongs to the LysR transcriptional regulatory family. As to quaternary structure, homodimer.

In terms of biological role, controls the transcription of genes involved in arginine and lysine metabolism. This chain is HTH-type transcriptional regulator ArgP, found in Serratia proteamaculans (strain 568).